A 433-amino-acid polypeptide reads, in one-letter code: Protein RETICULATA-RELATED 1, chloroplastic (433 aa).

A chloroplast-targeting transit peptide spans 1–63 (MSISLKISHI…LSSRNLRNRC (63 aa)). The residue at position 64 (Val64) is an N-acetylvaline. Over residues 93–105 (DLEPELDDGDGGD) the composition is skewed to acidic residues. The segment at 93–143 (DLEPELDDGDGGDENGNNDGGGNGGNGDGGGGGGDGEGDDGEDEADKAEEK) is disordered. Over residues 110–127 (NDGGGNGGNGDGGGGGGD) the composition is skewed to gly residues. The span at 128-139 (GEGDDGEDEADK) shows a compositional bias: acidic residues. 2 helical membrane-spanning segments follow: residues 249–269 (LYAA…GLLA) and 323–343 (LLYG…ANLI).

This sequence belongs to the RETICULATA family. Expressed in root vasculature, distal region of young leaf primordia, leaf bundle sheath cells, hydathodes and pollen grains.

The protein localises to the plastid. It is found in the chloroplast membrane. In terms of biological role, may play a role in leaf development. This Arabidopsis thaliana (Mouse-ear cress) protein is Protein RETICULATA-RELATED 1, chloroplastic.